A 564-amino-acid polypeptide reads, in one-letter code: Homeobox protein unc-62 (564 aa).

Disordered stretches follow at residues Asn40–Ala59, Glu216–Gly270, Ser293–Thr313, Pro328–Lys397, and Ile455–Leu503. In terms of domain architecture, MEIS N-terminal spans Ser133–Ala218. The span at Ser219–Met230 shows a compositional bias: low complexity. Polar residues-rich tracts occupy residues Pro328–Ser344 and Leu381–Asn390. A DNA-binding region (homeobox; TALE-type) is located at residues Lys392–Met454. 2 stretches are compositionally biased toward polar residues: residues Ile455–Val469 and Ala494–Leu503.

The protein belongs to the TALE/MEIS homeobox family. Forms a heterodimer with homeobox ceh-60.

The protein resides in the nucleus. Its function is as follows. Acts redundantly with ceh-20 and ceh-40 to perform overlapping roles during embryogenesis. Required for postembryonic development of the ectoderm, including the Q, V and P cell lineages, playing a crucial role in ensuring that these cells and their descendants undergo their invariant patterns of cell division, migration, fusion and morphogenesis. Has a role in the mig-13 pathway to promote anterior migration of neuroblasts in the Q lineage. Required for multiple roles in regulating vulva development. Associates with homeobox ceh-60 to regulate gene expression, including repression of genes involved in innate immunity and activation of genes involved in vitellogenesis. Involved in lipid homeostasis, contributing to the formation of the cuticle. The polypeptide is Homeobox protein unc-62 (unc-62) (Caenorhabditis elegans).